A 3707-amino-acid polypeptide reads, in one-letter code: uncharacterized protein (3707 aa).

A run of 6 helical transmembrane segments spans residues 117-137 (IFTG…ATFL), 152-172 (AAAL…LFGL), 174-194 (FIVV…FLLL), 222-242 (IFGF…PFLS), 269-289 (FSYL…ICWF), and 318-338 (HLFF…YFGI). Disordered stretches follow at residues 3139-3164 (FSVR…YKKT) and 3583-3612 (GREE…GQFP). Over residues 3140 to 3149 (SVRKRKKRGN) the composition is skewed to basic residues.

This sequence belongs to the ycf78 family.

The protein localises to the plastid. Its subcellular location is the chloroplast membrane. This is an uncharacterized protein from Stigeoclonium helveticum (Green alga).